The chain runs to 901 residues: DNA mismatch repair protein MutS (901 aa).

Residues methionine 1–serine 12 are compositionally biased toward polar residues. The interval methionine 1–proline 25 is disordered. Glycine 679–serine 686 contributes to the ATP binding site.

Belongs to the DNA mismatch repair MutS family.

Functionally, this protein is involved in the repair of mismatches in DNA. It is possible that it carries out the mismatch recognition step. This protein has a weak ATPase activity. The protein is DNA mismatch repair protein MutS of Trichodesmium erythraeum (strain IMS101).